The primary structure comprises 97 residues: Peptide YY-A (97 aa).

Residues 1-28 (MAVMLKPWTVVATVLICVLLCLGTFVDA) form the signal peptide. A Tyrosine amide modification is found at tyrosine 64. A propeptide spans 68–97 (STSEDVMAELLFGDDTEHKQRSRYDDSFMW) (C-terminal extension).

Belongs to the NPY family. In terms of tissue distribution, mainly expressed in brainstem neurons, and in the telencephalon. Also expressed in intestinal endocrine cells.

The protein localises to the secreted. The protein is Peptide YY-A (pyya) of Danio rerio (Zebrafish).